Consider the following 87-residue polypeptide: Cell division topological specificity factor (87 aa).

Belongs to the MinE family.

Its function is as follows. Prevents the cell division inhibition by proteins MinC and MinD at internal division sites while permitting inhibition at polar sites. This ensures cell division at the proper site by restricting the formation of a division septum at the midpoint of the long axis of the cell. The polypeptide is Cell division topological specificity factor (Vibrio parahaemolyticus serotype O3:K6 (strain RIMD 2210633)).